An 81-amino-acid chain; its full sequence is NAD(P)H-quinone oxidoreductase subunit L (81 aa).

2 helical membrane-spanning segments follow: residues 13–33 (LLVI…IPLF) and 51–71 (LGIY…APFL).

The protein belongs to the complex I NdhL subunit family. NDH-1 can be composed of about 15 different subunits; different subcomplexes with different compositions have been identified which probably have different functions.

It localises to the cellular thylakoid membrane. It carries out the reaction a plastoquinone + NADH + (n+1) H(+)(in) = a plastoquinol + NAD(+) + n H(+)(out). It catalyses the reaction a plastoquinone + NADPH + (n+1) H(+)(in) = a plastoquinol + NADP(+) + n H(+)(out). NDH-1 shuttles electrons from an unknown electron donor, via FMN and iron-sulfur (Fe-S) centers, to quinones in the respiratory and/or the photosynthetic chain. The immediate electron acceptor for the enzyme in this species is believed to be plastoquinone. Couples the redox reaction to proton translocation, and thus conserves the redox energy in a proton gradient. Cyanobacterial NDH-1 also plays a role in inorganic carbon-concentration. This Synechococcus sp. (strain WH7803) protein is NAD(P)H-quinone oxidoreductase subunit L.